Here is a 592-residue protein sequence, read N- to C-terminus: Inactive metallocarboxypeptidase ecm14 (592 aa).

Positions 1-22 (MYRQDHVFVVLCAVLLAGQVTA) are cleaved as a signal peptide. Residues 23–175 (VPAGTGINPH…AIYESRYPTR (153 aa)) constitute a propeptide that is removed on maturation. The region spanning 203-524 (HYQPFNVILQ…NSVLVLGHFL (322 aa)) is the Peptidase M14 domain. Residues His267 and Glu270 each coordinate Zn(2+). Substrate-binding positions include 267 to 270 (HARE), Arg325, and 342 to 343 (DR). Cys336 and Cys359 are disulfide-bonded. An N-linked (GlcNAc...) asparagine glycan is attached at Asn383. A Zn(2+)-binding site is contributed by His399. 400-401 (SY) serves as a coordination point for substrate. Asn548 carries an N-linked (GlcNAc...) asparagine glycan.

The protein belongs to the peptidase M14 family. Zn(2+) serves as cofactor.

Its subcellular location is the vacuole. It localises to the secreted. Functionally, inactive carboxypeptidase that may play a role in cell wall organization and biogenesis. The protein is Inactive metallocarboxypeptidase ecm14 (ecm14) of Talaromyces stipitatus (strain ATCC 10500 / CBS 375.48 / QM 6759 / NRRL 1006) (Penicillium stipitatum).